Consider the following 308-residue polypeptide: Testis-expressed protein 52 (308 aa).

In terms of tissue distribution, expressed in Testis.

The polypeptide is Testis-expressed protein 52 (Mus musculus (Mouse)).